We begin with the raw amino-acid sequence, 160 residues long: Large ribosomal subunit protein uL13 (160 aa).

This sequence belongs to the universal ribosomal protein uL13 family. Part of the 50S ribosomal subunit.

Its function is as follows. This protein is one of the early assembly proteins of the 50S ribosomal subunit, although it is not seen to bind rRNA by itself. It is important during the early stages of 50S assembly. The protein is Large ribosomal subunit protein uL13 of Orientia tsutsugamushi (strain Boryong) (Rickettsia tsutsugamushi).